The chain runs to 387 residues: Beta-alanyl-dopamine/carcinine hydrolase (387 aa).

Belongs to the peptidase C45 family. The unprocessed protein forms homodimers. May form heterodimers composed of a 15 kDa alpha subunit and a 30 kDa beta subunit. In terms of processing, the protein is synthesized as a 43 kDa precursor which is then self-processed into a 15 kDa alpha subunit and a 30 kDa beta subunit. Processing appears to be necessary for beta-alanyl-dopamine/carcinine hydrolase activity. The beta subunit carries the beta-alanyl-dopamine/carcinine hydrolase activity. In terms of tissue distribution, expressed in body, head, optic lobes and retina (at protein level). Expressed in photoreceptor cells R1-R6 in the lamina and in photoreceptor cells R7 and R8 in the medulla (at protein level).

The protein resides in the cell projection. Its subcellular location is the axon. It localises to the cytoplasm. It catalyses the reaction carcinine + H2O = histamine + beta-alanine. The catalysed reaction is beta-alanyl-dopamine + H2O = dopamine + beta-alanine. In the cuticle, catalyzes the hydrolysis of beta-alanyl-dopamine releasing dopamine and beta-alanine; dopamine is a metabolite involved in the pigmentation and sclerotization of the insect cuticle. In the photoreceptor cells, catalyzes the hydrolysis of carcinine releasing histamine and beta-alanine contributing to the recycling of the neurotransmitter histamine in the optical nerve system. Also, regulates the cuticular hydrocarbon composition in females. In Drosophila melanogaster (Fruit fly), this protein is Beta-alanyl-dopamine/carcinine hydrolase.